Here is a 388-residue protein sequence, read N- to C-terminus: P2X receptor E (388 aa).

At 1-28 (MNFRNIDWDSLFSYSTIKIVRIRDKRLG) the chain is on the cytoplasmic side. The helical transmembrane segment at 29–49 (ILHFAFLIGIILYIIVGTIFL) threads the bilayer. The Lumenal portion of the chain corresponds to 50–312 (QKKYLVLESP…QLGQFDFQTM (263 aa)). The tract at residues 291-304 (RHGVRIIFIQTGQL) is pore-forming motif. A helical transmembrane segment spans residues 313-333 (LLTFVSGIGLVTAASLIVDII). Over 334–388 (ATRIMPQRSRYQELKFQDSSINNTQKTPTNDHTPLLKDNEDTINENSYQNNSYEK) the chain is Cytoplasmic. The segment at 349-388 (FQDSSINNTQKTPTNDHTPLLKDNEDTINENSYQNNSYEK) is disordered. Composition is skewed to polar residues over residues 350–365 (QDSSINNTQKTPTNDH) and 377–388 (NENSYQNNSYEK).

This sequence belongs to the P2X receptor family.

It is found in the contractile vacuole membrane. In terms of biological role, P2X receptors are ATP-gated ion channels that play a role in intracellular calcium signaling. Not required for the purinergic response to extracellular nucleotides. Not essential for osmoregulation. Inward currents evoked by intracellular ATP. ATP analog beta, gamma-imido-ATP is a weak partial agonist of p2xE. Exclusively selective for ATP over other nucleotides. Insensitive to copper and P2 receptor antagonists PPADS and suramin but strongly inhibited by sodium ions. More permeable to ammonium than either sodium or potassium ions and less permeable to choline. Permeable to calcium ions, but not chloride. The protein is P2X receptor E (p2xE) of Dictyostelium discoideum (Social amoeba).